The sequence spans 453 residues: Ribosomal protein uS12 methylthiotransferase RimO (453 aa).

The region spanning 5 to 120 is the MTTase N-terminal domain; it reads PKVGFVSLGC…VMQAVHSHLP (116 aa). [4Fe-4S] cluster-binding residues include Cys14, Cys50, Cys79, Cys151, Cys155, and Cys158. In terms of domain architecture, Radical SAM core spans 137–382; the sequence is LTPRHYAYLK…MEVAEEVSAN (246 aa). The TRAM domain maps to 385–453; it reads QRKIGKTLKV…ADGHDLWGEV (69 aa).

Belongs to the methylthiotransferase family. RimO subfamily. The cofactor is [4Fe-4S] cluster.

The protein resides in the cytoplasm. The enzyme catalyses L-aspartate(89)-[ribosomal protein uS12]-hydrogen + (sulfur carrier)-SH + AH2 + 2 S-adenosyl-L-methionine = 3-methylsulfanyl-L-aspartate(89)-[ribosomal protein uS12]-hydrogen + (sulfur carrier)-H + 5'-deoxyadenosine + L-methionine + A + S-adenosyl-L-homocysteine + 2 H(+). In terms of biological role, catalyzes the methylthiolation of an aspartic acid residue of ribosomal protein uS12. The protein is Ribosomal protein uS12 methylthiotransferase RimO of Burkholderia orbicola (strain MC0-3).